Reading from the N-terminus, the 299-residue chain is Zeta-sarcoglycan (299 aa).

The Cytoplasmic portion of the chain corresponds to 1-37 (MTREQYILATQQNNLPRTENAQLYPVGIYGWRKRCLY). A helical; Signal-anchor for type II membrane protein membrane pass occupies residues 38–58 (FFVLLLLVTMIVNLAMTIWIL). The Extracellular segment spans residues 59 to 299 (KVMNFTVDGM…QSSSNICLWS (241 aa)). Residues Asn-62 and Asn-110 are each glycosylated (N-linked (GlcNAc...) asparagine). Residues Cys-273 and Cys-289 are joined by a disulfide bond.

It belongs to the sarcoglycan beta/delta/gamma/zeta family.

Its subcellular location is the cell membrane. It is found in the sarcolemma. The protein resides in the cytoplasm. The protein localises to the cytoskeleton. In terms of biological role, component of the sarcoglycan complex, a subcomplex of the dystrophin-glycoprotein complex which forms a link between the F-actin cytoskeleton and the extracellular matrix. May play a role in the maintenance of striated muscle membrane stability. The protein is Zeta-sarcoglycan (SGCZ) of Homo sapiens (Human).